A 460-amino-acid chain; its full sequence is Ammonium transporter Rh type C (460 aa).

The Cytoplasmic segment spans residues 1–9; sequence MIWNTNLRW. The chain crosses the membrane as a helical span at residues 10 to 30; it reads RLPVACLLLEVALIALFGVFV. Over 31 to 61 the chain is Extracellular; sequence RYDMDADPHWVQEKVIKNLSTDLENEFYYRY. An N-linked (GlcNAc...) asparagine glycan is attached at Asn48. Residues 62 to 82 form a helical membrane-spanning segment; it reads PSFQDVHVMIFVGFGFLMTFL. At 83–89 the chain is on the cytoplasmic side; that stretch reads QRYGYSS. A helical membrane pass occupies residues 90–110; it reads VGFNFLLAAFGIQWALLMQGW. The Extracellular portion of the chain corresponds to 111–125; sequence LQSFDGRYILVDLEN. Residues 126-145 traverse the membrane as a helical segment; sequence LINADFCVGSVCVAFGAVLG. The Cytoplasmic portion of the chain corresponds to 146–151; that stretch reads KVSPVQ. Residues 152–174 traverse the membrane as a helical segment; the sequence is LLIMTLFQVTLFSINEYILLNLL. Topologically, residues 175–179 are extracellular; the sequence is EVKDS. The helical transmembrane segment at 180–200 threads the bilayer; the sequence is GGSMTIHAFGAYFGLTVAWIL. The Cytoplasmic segment spans residues 201–219; the sequence is YRPNLHLSKERQSSTYHSD. The chain crosses the membrane as a helical span at residues 220–240; sequence LFAMIGTLFLWMYWPSFNSAI. Topologically, residues 241–251 are extracellular; the sequence is SNHGDAQHRAA. A helical membrane pass occupies residues 252-272; it reads INTYCSLAACVLTSVALSSAL. Over 273–285 the chain is Cytoplasmic; sequence HRKGKLDMVHIQN. Residues 286 to 303 form a helical membrane-spanning segment; that stretch reads ATLAGGVGLGTVAELMVL. Over 304 to 306 the chain is Extracellular; the sequence is PFG. Residues 307-329 traverse the membrane as a helical segment; sequence SLIIGFVCGIVSTLGFVYLTPFL. The Cytoplasmic segment spans residues 330 to 346; the sequence is ESRLHIQDTCGVHNLHG. Residues 347–367 form a helical membrane-spanning segment; sequence IPGIIGGIAGAVTASIANIDL. Over 368-396 the chain is Extracellular; sequence YGEEGLAYAFGIERSKLNWSPNMQGRFQA. The helical transmembrane segment at 397–417 threads the bilayer; it reads AGLFVSLAMALVGGVIVGVIL. Residues 418-460 lie on the Cytoplasmic side of the membrane; it reads RLPFWGQAPDENCFEDAVYWEIPKEPKSTALRSEDSSIKPPEP.

The protein belongs to the ammonium transporter (TC 2.A.49) family. Rh subfamily. As to quaternary structure, homotrimer. In terms of processing, N-glycosylated.

Its subcellular location is the apical cell membrane. The catalysed reaction is NH4(+)(in) = NH4(+)(out). The enzyme catalyses methylamine(out) = methylamine(in). It catalyses the reaction CO2(out) = CO2(in). Functionally, ammonium transporter involved in the maintenance of acid-base homeostasis. Transports ammonium and its related derivative methylammonium across the plasma membrane of epithelial cells likely contributing to renal transepithelial ammonia transport and ammonia metabolism. Postulated to primarily mediate an electroneutral bidirectional transport of NH3 ammonia species according to a mechanism that implies interaction of an NH4(+) ion with acidic residues of the pore entry followed by dissociation of NH4(+) into NH3 and H(+). As a result NH3 transits through the central pore and is protonated on the extracellular side reforming NH4(+). May act as a CO2 channel providing for renal acid secretion. The protein is Ammonium transporter Rh type C (RHCG) of Bos taurus (Bovine).